A 425-amino-acid polypeptide reads, in one-letter code: Septin-7 (425 aa).

In terms of domain architecture, Septin-type G spans 28–297 (RGFEFTLMVV…ENYRSRKLAA (270 aa)). The segment at 38–45 (GESGLGKS) is G1 motif. GTP contacts are provided by residues 38–45 (GESGLGKS), T71, G97, 176–184 (KADTLTPEE), G231, and R246. Residues 94–97 (DTPG) form a G3 motif region. The interval 175 to 178 (AKAD) is G4 motif. A coiled-coil region spans residues 324–421 (LAQMEEERRE…SRTLEKNKKK (98 aa)).

It belongs to the TRAFAC class TrmE-Era-EngA-EngB-Septin-like GTPase superfamily. Septin GTPase family. In terms of assembly, monomer, and homodimer. Nucleotide binding promotes oligomerization. Can form heterooligomers with other family members and form filaments.

It localises to the cytoplasm. The protein resides in the chromosome. Its subcellular location is the centromere. The protein localises to the kinetochore. It is found in the cytoskeleton. It localises to the spindle. The protein resides in the cleavage furrow. Its subcellular location is the midbody. The protein localises to the cilium axoneme. In terms of biological role, filament-forming cytoskeletal GTPase. Required for normal organization of the actin cytoskeleton. Required for normal progress through mitosis. Involved in cytokinesis. Plays a role in ciliogenesis and collective cell movements including convergent extension during gastrulation. Controls cell elongation but not polarization during convergent extension. This is Septin-7 from Xenopus laevis (African clawed frog).